The chain runs to 313 residues: Acetaldehyde dehydrogenase (313 aa).

An NAD(+)-binding site is contributed by 13-16 (SGNI). Cys-133 functions as the Acyl-thioester intermediate in the catalytic mechanism. NAD(+) contacts are provided by residues 164–172 (SAGPGTRAN) and Asn-291.

The protein belongs to the acetaldehyde dehydrogenase family.

The catalysed reaction is acetaldehyde + NAD(+) + CoA = acetyl-CoA + NADH + H(+). This chain is Acetaldehyde dehydrogenase, found in Cupriavidus pinatubonensis (strain JMP 134 / LMG 1197) (Cupriavidus necator (strain JMP 134)).